We begin with the raw amino-acid sequence, 415 residues long: Histidine--tRNA ligase (415 aa).

It belongs to the class-II aminoacyl-tRNA synthetase family. In terms of assembly, homodimer.

The protein resides in the cytoplasm. The enzyme catalyses tRNA(His) + L-histidine + ATP = L-histidyl-tRNA(His) + AMP + diphosphate + H(+). This Clostridium botulinum (strain 657 / Type Ba4) protein is Histidine--tRNA ligase.